A 157-amino-acid chain; its full sequence is Large ribosomal subunit protein uL15 (157 aa).

Positions 1 to 64 (MKLNEIPAVP…MPLQRRLPKR (64 aa)) are disordered. Residues 21–31 (RGPGSGNGKTA) are compositionally biased toward gly residues.

The protein belongs to the universal ribosomal protein uL15 family. In terms of assembly, part of the 50S ribosomal subunit.

Functionally, binds to the 23S rRNA. This is Large ribosomal subunit protein uL15 from Magnetococcus marinus (strain ATCC BAA-1437 / JCM 17883 / MC-1).